The sequence spans 417 residues: Serine hydroxymethyltransferase (417 aa).

Residues L121 and 125–127 (GHL) each bind (6S)-5,6,7,8-tetrahydrofolate. The residue at position 229 (K229) is an N6-(pyridoxal phosphate)lysine. (6S)-5,6,7,8-tetrahydrofolate is bound at residue 354-356 (SPF).

This sequence belongs to the SHMT family. Homodimer. Requires pyridoxal 5'-phosphate as cofactor.

The protein localises to the cytoplasm. It catalyses the reaction (6R)-5,10-methylene-5,6,7,8-tetrahydrofolate + glycine + H2O = (6S)-5,6,7,8-tetrahydrofolate + L-serine. It functions in the pathway one-carbon metabolism; tetrahydrofolate interconversion. The protein operates within amino-acid biosynthesis; glycine biosynthesis; glycine from L-serine: step 1/1. Its function is as follows. Catalyzes the reversible interconversion of serine and glycine with tetrahydrofolate (THF) serving as the one-carbon carrier. This reaction serves as the major source of one-carbon groups required for the biosynthesis of purines, thymidylate, methionine, and other important biomolecules. Also exhibits THF-independent aldolase activity toward beta-hydroxyamino acids, producing glycine and aldehydes, via a retro-aldol mechanism. This is Serine hydroxymethyltransferase from Stutzerimonas stutzeri (strain A1501) (Pseudomonas stutzeri).